The sequence spans 764 residues: Polyadenylate-binding protein, cytoplasmic and nuclear (764 aa).

Positions 36-56 (VPEAQAEGAEAAPTPTAAPHP) are disordered. RRM domains are found at residues 60–138 (ASLY…WSQR), 148–225 (GNIF…HHIP), 241–318 (TNVY…RAQK), and 344–462 (VNLY…LAQR). Disordered stretches follow at residues 375-420 (VMRD…GDRK) and 587-634 (GRGG…PRGN). Composition is skewed to basic and acidic residues over residues 387–399 (KDEKDKENKKEGE) and 408–420 (GSEKKTEKKGDRK). Over residues 587–596 (GRGGPAGRGP) the composition is skewed to gly residues. Over residues 597-613 (QGIPAGIPQGLQGGPAV) the composition is skewed to low complexity. In terms of domain architecture, PABC spans 657-734 (GSFLQAQLAT…ALAVYDEYLK (78 aa)). A compositionally biased stretch (polar residues) spans 735–745 (TQGQQPTQQPA). Positions 735–764 (TQGQQPTQQPAEANGEQPKAEEQKPEEQKA) are disordered. The segment covering 752–764 (PKAEEQKPEEQKA) has biased composition (basic and acidic residues).

This sequence belongs to the polyadenylate-binding protein type-1 family.

It is found in the cytoplasm. The protein localises to the nucleus. In terms of biological role, binds the poly(A) tail of mRNA. Appears to be an important mediator of the multiple roles of the poly(A) tail in mRNA biogenesis, stability and translation. In the nucleus, involved in both mRNA cleavage and polyadenylation. Is also required for efficient mRNA export to the cytoplasm. Acts in concert with a poly(A)-specific nuclease (PAN) to affect poly(A) tail shortening, which may occur concomitantly with either nucleocytoplasmic mRNA transport or translational initiation. In the cytoplasm, stimulates translation initiation and regulates mRNA decay through translation termination-coupled poly(A) shortening, probably mediated by PAN. The chain is Polyadenylate-binding protein, cytoplasmic and nuclear (pabp-1) from Neurospora crassa (strain ATCC 24698 / 74-OR23-1A / CBS 708.71 / DSM 1257 / FGSC 987).